The following is a 515-amino-acid chain: Na(+)/H(+) antiporter NhaB (515 aa).

The next 13 membrane-spanning stretches (helical) occupy residues 23 to 43 (IIVFLILNPILYFLISPFIAG), 44 to 64 (WCLVIEFIFTLAMALKCYPLQ), 88 to 108 (IMASFEVILLLMFMVAGIYFM), 119 to 139 (LLITVRSKIVLSLSFCLSAAF), 143 to 163 (FLDALTVVAVIISVVMGFYGV), 202 to 222 (LMMHAGVGTALGGVMTLVGEP), 238 to 258 (FFIRMAPVTVPVLICGLITCV), 303 to 323 (GIIGIWLVCGLAFHLAAVGLI), 324 to 344 (GLSVIVLTTAFCGITSESTIG), 357 to 377 (LVVFFSVVAVIIDQHLFGPII), 389 to 409 (LLLFYGFNGLLSAISDNVFVA), 447 to 467 (ATPNGQAAFLFLLTSSLAPLI), and 477 to 497 (MALPYTIVLTVVGLLAVEYIL).

The protein belongs to the NhaB Na(+)/H(+) (TC 2.A.34) antiporter family.

It is found in the cell inner membrane. The enzyme catalyses 2 Na(+)(in) + 3 H(+)(out) = 2 Na(+)(out) + 3 H(+)(in). Its function is as follows. Na(+)/H(+) antiporter that extrudes sodium in exchange for external protons. In Mannheimia succiniciproducens (strain KCTC 0769BP / MBEL55E), this protein is Na(+)/H(+) antiporter NhaB.